We begin with the raw amino-acid sequence, 488 residues long: Probable aldehyde dehydrogenase (488 aa).

240–245 (GSSVTG) is a binding site for NAD(+). Catalysis depends on residues E262 and C296.

This sequence belongs to the aldehyde dehydrogenase family.

The catalysed reaction is an aldehyde + NAD(+) + H2O = a carboxylate + NADH + 2 H(+). Functionally, involved in an alpha-terpineol oxidation system. This Pseudomonas sp protein is Probable aldehyde dehydrogenase (terPE).